Reading from the N-terminus, the 283-residue chain is Flagellar filament 35 kDa core protein (283 aa).

The protein belongs to the bacterial flagellin family. As to quaternary structure, the flagellum consists of two outer layers around a core that contains several antigenically related polypeptides.

It is found in the periplasmic flagellum. It localises to the periplasm. Its function is as follows. Component of the core of the flagella. This Leptospira interrogans serogroup Icterohaemorrhagiae serovar Lai (strain 56601) protein is Flagellar filament 35 kDa core protein (flaB).